The primary structure comprises 382 residues: Inactive anthranilate O-methyltransferase 1 (382 aa).

Residues tyrosine 20, cysteine 61, asparagine 66, aspartate 102, leucine 103, serine 146, and tyrosine 147 each coordinate S-adenosyl-L-homocysteine. Mg(2+) contacts are provided by glutamate 268 and phenylalanine 270.

It belongs to the methyltransferase superfamily. Type-7 methyltransferase family. SABATH subfamily.

The protein is Inactive anthranilate O-methyltransferase 1 (AAMT1I) of Zea mays (Maize).